A 469-amino-acid chain; its full sequence is MSSNEKRFPEGFLWGGAVAANQVEGAYNEGGKGLSTADVSPNGIMSPFDESMTSLNLYHNGIDFYHRYKEDIALFAEMGFKAFRTSIAWTRIFPNGDEEEPNEEGLRFYDDLFDELLKHHIEPVVTISHYEMPLGLVKNYGGWKNRKVIEFYERYAKTVFKRYQHKVKYWMTFNEINVVLHAPFTGGGLVFEEGENKLNAMYQAAHHQFVASALAVKAGHDIIPDSKIGCMIAATTTYPMTSKPEDVFAAMENERKTLFFSDVQARGAYPGYMKRYLAENNIEIEMAEGDEELLKEHTVDYIGFSYYMSMAASTDPEELAKSGGNLLGGVKNPYLKSSEWGWQIDPKGLRITLNTLYDRYQKPLFIVENGLGAVDKVEEDGTIQDDYRINYLRDHLIEAREAIADGVELIGYTSWGPIDLVSASTAEMKKRYGFIYVDRDNEGNGTFNRIKKKSFNWYQQVIATNGESL.

The Proton donor role is filled by glutamate 175. Residue glutamate 368 is the Nucleophile of the active site.

It belongs to the glycosyl hydrolase 1 family.

The enzyme catalyses 6-phospho-beta-D-glucosyl-(1-&gt;4)-D-glucose + H2O = D-glucose 6-phosphate + D-glucose. Catalyzes the hydrolysis of aryl-phospho-beta-D-glucosides such as 4-methylumbelliferyl-phospho-beta-D-glucopyranoside (MUG-P), phosphoarbutin and phosphosalicin. Plays a major role in the utilization of arbutin or salicin as the sole carbon source. BglA and BglH are the major proteins contributing to hydrolysis of MUG-P by extracts of late-exponential-phase or stationary-phase B.subtilis cells. The sequence is that of Aryl-phospho-beta-D-glucosidase BglH (bglH) from Bacillus subtilis (strain 168).